An 809-amino-acid chain; its full sequence is H(+)/Cl(-) exchange transporter 7 (809 aa).

Topologically, residues 1 to 130 are cytoplasmic; it reads MANVSKKVSW…TAFRTVEIKR (130 aa). Phosphoserine is present on residues Ser-9 and Ser-64. A run of 2 helical transmembrane segments spans residues 131–163 and 178–201; these read WVICAMVGILTGLVACFIDIVVEKLAGLKYRLV and FSLLLWAALNAAFVLLGSTIVAFI. The short motif at 207–211 is the Selectivity filter part_1 element; that stretch reads GSGIP. Residue Ser-208 participates in chloride binding. An intramembrane region (helical) is located at residues 210 to 217; it reads IPQIKCFL. 2 helical membrane-spanning segments follow: residues 227–245 and 251–268; these read RLKTLVIKVSGVILSVVGG and EGPMIHSGSVIAAGISQG. The Selectivity filter part_2 motif lies at 249-253; the sequence is GKEGP. Intramembrane regions (helical) lie at residues 292–304 and 308–316; these read FVSAGAAAGVSAA and PVGGVLFSL. 5 helical membrane passes run 326–345, 379–409, 414–436, 491–511, and 516–539; these read FLTWRIFFASMISTFTLNFV, IPIFIAMGVVGGILGAVFNALNYWLTMFRIR, PCLQVVEATLVAAVTATAAFVLI, PMTLGLFTLVYFFLACWTYGL, and GVFIPSLLIGAAWGRLFGISLSYI. The short motif at 516–520 is the Selectivity filter part_3 element; that stretch reads GVFIP. Phe-518 is a binding site for chloride. Positions 549-563 form an intramembrane region, helical; the sequence is GKYALMGAAAQLGGI. Positions 564–566 form an intramembrane region, note=Loop between two helices; that stretch reads VRM. Positions 567–578 form an intramembrane region, helical; sequence TLSLTVIMMEAT. The segment at residues 579-582 is an intramembrane region (note=Loop between two helices); it reads SSVT. Residues 583 to 601 form a helical membrane-spanning segment; the sequence is YGFPIMLVLMTAKIVGDVF. Residues 602-809 are Cytoplasmic-facing; that stretch reads IEGLYDMHIQ…GLEELSLAQT (208 aa). Tyr-606 is a chloride binding site. CBS domains lie at 635–699 and 745–803; these read MSTP…VFVE and MNPS…GLEE. ATP is bound by residues 662–664 and 787–790; these read HNG and TRKD. At Ser-805 the chain carries Phosphoserine.

This sequence belongs to the chloride channel (TC 2.A.49) family. ClC-7/CLCN7 subfamily. In terms of assembly, chloride channel 7 are heteromers of alpha (CLCN7) and beta (OSTM1) subunits.

The protein resides in the lysosome membrane. It catalyses the reaction 2 chloride(in) + H(+)(out) = 2 chloride(out) + H(+)(in). Its function is as follows. Slowly voltage-gated channel mediating the exchange of chloride ions against protons. Functions as antiporter and contributes to the acidification of the lysosome lumen and may be involved in maintaining lysosomal pH. The CLC channel family contains both chloride channels and proton-coupled anion transporters that exchange chloride or another anion for protons. The presence of conserved gating glutamate residues is typical for family members that function as antiporters. The chain is H(+)/Cl(-) exchange transporter 7 (CLCN7) from Bos taurus (Bovine).